The chain runs to 549 residues: Neurofilament light polypeptide (549 aa).

An N-acetylserine modification is found at Ser2. Residues 2 to 92 (SSFYSEPYYS…KSIRTQEKAQ (91 aa)) are head. An O-linked (GlcNAc) threonine glycan is attached at Thr21. The residue at position 23 (Arg23) is an Asymmetric dimethylarginine; alternate. Arg23 carries the omega-N-methylarginine; alternate modification. Ser27 carries O-linked (GlcNAc) serine glycosylation. Arg30 carries the post-translational modification Omega-N-methylarginine. Position 43 is a phosphotyrosine (Tyr43). Residues Ser56, Ser66, and Ser102 each carry the phosphoserine modification. Positions 89–400 (EKAQLQDLND…KLLEGEETRL (312 aa)) constitute an IF rod domain. The interval 93–124 (LQDLNDRFASFIERVHELEQQNKVLEAQLLVL) is coil 1A. Residues 125–137 (RQKHSEPSRFRAL) are linker 1. The tract at residues 138–233 (YEQEIRDLRL…KVHEEEIAEL (96 aa)) is coil 1B. The segment at 234 to 252 (QAQIQYAQISVEMDVSSKP) is linker 12. The coil 2A stretch occupies residues 253–271 (DLSAALKDIRAQYEKLAAK). The interval 272–280 (NMQNAEEWF) is linker 2. Positions 281–396 (KSRFTVLTES…AAYRKLLEGE (116 aa)) are coil 2B. The epitope; recognized by IF-specific monoclonal antibody stretch occupies residues 381–391 (ALDIEIAAYRK). The interval 397-443 (ETRLSFTSVGSLTTGYSQSSQVFGRSAYGGLQTSSYLMSTRSFPSYY) is tail, subdomain A. The segment at 397 to 549 (ETRLSFTSVG…GEEQATKKKD (153 aa)) is tail. Residues 444 to 549 (TSHVQEEQIE…GEEQATKKKD (106 aa)) are tail, subdomain B (acidic). The interval 462-549 (KAEEAKDEPP…GEEQATKKKD (88 aa)) is disordered. The segment covering 471–534 (PSEGEAEEEG…ETKEAEEEEK (64 aa)) has biased composition (acidic residues). At Ser472 the chain carries Phosphoserine. At Thr526 the chain carries Phosphothreonine. The segment covering 535–549 (KDEGAGEEQATKKKD) has biased composition (basic and acidic residues).

This sequence belongs to the intermediate filament family. Forms homodimers (in vitro). Forms heterodimers with NEFH or NEFM; which can further hetero-oligomerize (in vitro). Forms heterodimers with INA (in vitro). Interacts with ARHGEF28. Interacts with TRIM2. O-glycosylated. In terms of processing, phosphorylated in the head and rod regions by the PKC kinase PKN1, leading to the inhibition of polymerization. Post-translationally, ubiquitinated in the presence of TRIM2 and UBE2D1.

The protein localises to the cell projection. The protein resides in the axon. It is found in the cytoplasm. Its subcellular location is the cytoskeleton. Neurofilaments usually contain three intermediate filament proteins: NEFL, NEFM, and NEFH which are involved in the maintenance of neuronal caliber. May additionally cooperate with the neuronal intermediate filament proteins PRPH and INA to form neuronal filamentous networks. This is Neurofilament light polypeptide (NEFL) from Sus scrofa (Pig).